Here is a 403-residue protein sequence, read N- to C-terminus: Ribose-phosphate pyrophosphokinase 1, chloroplastic (403 aa).

Residues 1-49 (MASLGLSFPPAAKTPTYLASSSSTFFSNSSLSVRTSQFRSRNSVFACVK) constitute a chloroplast transit peptide. Mg(2+) is bound by residues D217, H219, D228, and D232. The tract at residues 303–318 (GKVAIMVDDMIDTAGT) is binding of phosphoribosylpyrophosphate.

This sequence belongs to the ribose-phosphate pyrophosphokinase family. Requires Mg(2+) as cofactor.

The protein localises to the plastid. Its subcellular location is the chloroplast. The enzyme catalyses D-ribose 5-phosphate + ATP = 5-phospho-alpha-D-ribose 1-diphosphate + AMP + H(+). This is Ribose-phosphate pyrophosphokinase 1, chloroplastic (PRS1) from Arabidopsis thaliana (Mouse-ear cress).